A 754-amino-acid chain; its full sequence is 5-methyltetrahydropteroyltriglutamate--homocysteine methyltransferase (754 aa).

5-methyltetrahydropteroyltri-L-glutamate is bound by residues 17–20 (RELK) and K117. L-homocysteine-binding positions include 431 to 433 (IGS) and E484. L-methionine is bound by residues 431–433 (IGS) and E484. 5-methyltetrahydropteroyltri-L-glutamate-binding positions include 515–516 (RC) and W561. Position 599 (D599) interacts with L-homocysteine. D599 lines the L-methionine pocket. E605 is a 5-methyltetrahydropteroyltri-L-glutamate binding site. Zn(2+) contacts are provided by H641, C643, and E665. Catalysis depends on H694, which acts as the Proton donor. C726 contributes to the Zn(2+) binding site.

This sequence belongs to the vitamin-B12 independent methionine synthase family. Requires Zn(2+) as cofactor.

The catalysed reaction is 5-methyltetrahydropteroyltri-L-glutamate + L-homocysteine = tetrahydropteroyltri-L-glutamate + L-methionine. The protein operates within amino-acid biosynthesis; L-methionine biosynthesis via de novo pathway; L-methionine from L-homocysteine (MetE route): step 1/1. Catalyzes the transfer of a methyl group from 5-methyltetrahydrofolate to homocysteine resulting in methionine formation. This is 5-methyltetrahydropteroyltriglutamate--homocysteine methyltransferase from Salmonella arizonae (strain ATCC BAA-731 / CDC346-86 / RSK2980).